A 464-amino-acid polypeptide reads, in one-letter code: L-cysteine:1D-myo-inositol 2-amino-2-deoxy-alpha-D-glucopyranoside ligase (464 aa).

Cys-67 is a binding site for Zn(2+). Residues 67–70, Thr-82, and 105–107 contribute to the L-cysteinyl-5'-AMP site; these read CGIT and NVT. The 'HIGH' region motif lies at 69-79; that stretch reads ITPYDATHLGH. The 'ERGGDP' region motif lies at 207-212; the sequence is ERGGDP. Trp-247 is a binding site for L-cysteinyl-5'-AMP. Cys-251 is a binding site for Zn(2+). 269–271 contacts L-cysteinyl-5'-AMP; that stretch reads GTD. His-276 is a binding site for Zn(2+). Val-303 is an L-cysteinyl-5'-AMP binding site. A 'KMSKS' region motif is present at residues 309 to 313; that stretch reads KMSKS. The tract at residues 410–435 is disordered; the sequence is AGGSAGAGPDPTHQGGPVRGSGGDVP.

It belongs to the class-I aminoacyl-tRNA synthetase family. MshC subfamily. Monomer. Zn(2+) serves as cofactor.

The catalysed reaction is 1D-myo-inositol 2-amino-2-deoxy-alpha-D-glucopyranoside + L-cysteine + ATP = 1D-myo-inositol 2-(L-cysteinylamino)-2-deoxy-alpha-D-glucopyranoside + AMP + diphosphate + H(+). In terms of biological role, catalyzes the ATP-dependent condensation of GlcN-Ins and L-cysteine to form L-Cys-GlcN-Ins. The polypeptide is L-cysteine:1D-myo-inositol 2-amino-2-deoxy-alpha-D-glucopyranoside ligase (Frankia casuarinae (strain DSM 45818 / CECT 9043 / HFP020203 / CcI3)).